Consider the following 2264-residue polypeptide: Protein Ycf2 (2264 aa).

1611–1618 (GSIGTGRS) is a binding site for ATP.

Belongs to the Ycf2 family.

It is found in the plastid. Its subcellular location is the chloroplast stroma. Its function is as follows. Probable ATPase of unknown function. Its presence in a non-photosynthetic plant (Epifagus virginiana) and experiments in tobacco indicate that it has an essential function which is probably not related to photosynthesis. The sequence is that of Protein Ycf2 from Lactuca sativa (Garden lettuce).